A 455-amino-acid polypeptide reads, in one-letter code: Probable glycine dehydrogenase (decarboxylating) subunit 1 (455 aa).

Belongs to the GcvP family. N-terminal subunit subfamily. As to quaternary structure, the glycine cleavage system is composed of four proteins: P, T, L and H. In this organism, the P 'protein' is a heterodimer of two subunits.

It catalyses the reaction N(6)-[(R)-lipoyl]-L-lysyl-[glycine-cleavage complex H protein] + glycine + H(+) = N(6)-[(R)-S(8)-aminomethyldihydrolipoyl]-L-lysyl-[glycine-cleavage complex H protein] + CO2. Its function is as follows. The glycine cleavage system catalyzes the degradation of glycine. The P protein binds the alpha-amino group of glycine through its pyridoxal phosphate cofactor; CO(2) is released and the remaining methylamine moiety is then transferred to the lipoamide cofactor of the H protein. The protein is Probable glycine dehydrogenase (decarboxylating) subunit 1 of Francisella tularensis subsp. tularensis (strain FSC 198).